Consider the following 405-residue polypeptide: Opine dehydrogenase (405 aa).

It belongs to the lysopine/nopaline/octopine/opine/vitopine dehydrogenases family.

The protein is Opine dehydrogenase of Haliotis discus hannai (Japanese abalone).